Consider the following 305-residue polypeptide: Peroxisome assembly protein 26 (305 aa).

The disordered stretch occupies residues 1 to 25 (MKSDCSTSAAPFRGLGGPLRSSEPV). At 1 to 246 (MKSDCSTSAA…RQLWDSAVSH (246 aa)) the chain is on the cytoplasmic side. The helical; Signal-anchor for type II membrane protein transmembrane segment at 247–267 (FFSLPFKKSLLAALILCLLVV) threads the bilayer. The Peroxisomal matrix segment spans residues 268 to 305 (RFDPASPSSLPSLYKLAQLFRWIRKAASSRLYQLRIRD).

It belongs to the peroxin-26 family. Interacts (via its cytoplasmic domain) with PEX6; interaction is direct and is ATP-dependent. Interacts with PEX1; interaction is indirect and is mediated via interaction with PEX6.

It localises to the peroxisome membrane. Its function is as follows. Peroxisomal docking factor that anchors PEX1 and PEX6 to peroxisome membranes. PEX26 is therefore required for the formation of the PEX1-PEX6 AAA ATPase complex, a complex that mediates the extraction of the PEX5 receptor from peroxisomal membrane. This is Peroxisome assembly protein 26 (PEX26) from Macaca fascicularis (Crab-eating macaque).